The following is a 113-amino-acid chain: Transmembrane protein 256 (113 aa).

An N-terminal signal peptide occupies residues 1–29 (MAGPAAAFRRLGALSGAAALGFASYGAHG). At 30 to 63 (AQFPDAYGKELFDKANKHHFLHSLALLGVPHCRK) the chain is on the extracellular side. K43 is modified (N6-acetyllysine). The chain crosses the membrane as a helical span at residues 64-84 (PLWAGLLLASGTTLFCTSFYY). The Cytoplasmic portion of the chain corresponds to 85–92 (QALSGDPS). The helical transmembrane segment at 93 to 113 (IQTLAPAGGTLLLLGWLALAL) threads the bilayer.

It belongs to the TMEM256 family.

It is found in the membrane. The protein is Transmembrane protein 256 (TMEM256) of Homo sapiens (Human).